Reading from the N-terminus, the 1421-residue chain is MEGSYWWLSLLALLAWGANGESTSPAETSPAPTTPNPPVVNPSLRRKIVNQRILSAMGMDSDPSNEALNGVCQSIHSNGCNANELKLRLADFFIDTNSSQCYDEILVKKPCSSLTPAHNSHWVPRGLDKSEVDKIFDTKLKLFFSQSRKVTCLSASALNPSQFVKHFQVKIQETSGPAKQSLRSLHCVNLVWSHSHKGEKEVVHVLQSAVPVKLKNCLAMLNFRQCYYNQQSEGPVVVPSYQHNGEKWVTGAYTMTVEVDKHADGPCEISTTCITEGSEIKPGVHSLRGFKTTLVIHGKRNTGRRLLSSSNARQECSSGTFLGEGGSAQVVGPKNDGPGDHITFCNGSVVTKIRLGQEHGCYTVRRIKTYRNCRPEEGSSACEVDDELKPCGAQKCMNVHLSVKGLVKTSRGSNVQVHSCDKDCLIQIPEGFGDIQIDCPGGTQHYLESNVLDVDCPMYNRLGGLMLYFCRMSHRPRTCLALFIWLGAGYGITCIAGYMVYYAILALSMLTRCLKRKYMVKGDFCLKCEQKCVTSLDQTLHDESCSYNICPYCGNRLPEEGLRRHVPSCPKRKQRLEEIDLYLDYLLVPCPLHFALSTAVKLGTLLKRLSWVTVFLCLFLTAIAPVQGQVTTSPVLPSNQSTECTLLPPPVFLIFSAVLMSKTLKRMGPVNKVGAAGHSARRTNSPKNLYKSKQIANTKSGPREPRRRVVVKALLILTASSALQSIHLAQAFDSGSLPEGAWEEEMQLVQGCNQECSLEEDECSCPDGQSMTRKLLFFKGLNSAASKMASSHRLLTSVSIDTPWGAIKVESTYKPRLASSNIQLAWNSIEEQGDKVILSGKSTSIIKLEEKTGMQWSLGSESAAEEKRLLVSILDYTQVYSSTFQYITGDRTVSEWPKATCTGDCPDRCGCSTSSCLYKSWPHSRNWRCNPTWCWGVGTGCTCCGVDILRPFNKYFVTKWTTEYVRTDVLVCVELTDQERHCDVVEAGSQFVIGPVRVVVSDPQNVQTKLPSEILTIQKLEGNQVVDIMHATSIVSAKNACKLQSCTHGSPGDMQILHTDNLIQHSHDGGLNLADLNPLVNSTWMSWEGCDLDYYCTTGSWPSCTYTGINSENTESFDNLLNTESNLCERFHFHSKRISASGSTLQMDLKGRPNSGGGELSVLVDVKGLELHSKKISLKGLSFKTLSCSGCYACSSGLSCTVEVRIERPDEFTVHLRSVSPDIAVAEGSIIARRMTGGPLSRLRAFAVRKVKKICFEIVEKSYCKDCKNEDTTKCIEVELQPPKDILLEHKGTIIKRQNETCVSGLQCWTESASSFVSGVGSFFRNYLGSITLGIVLTLLPVAVVLLFFCYGDKLFKLCSCFRCCRGLSRGKVRKELDEDELRNKLKKFSKEGELFGKEKKDARTIALLLSGKGKNYKELV.

Residues 1-20 (MEGSYWWLSLLALLAWGANG) form the signal peptide. Over 21 to 479 (ESTSPAETSP…CRMSHRPRTC (459 aa)) the chain is Lumenal. Residues 22-31 (STSPAETSPA) are compositionally biased toward low complexity. The disordered stretch occupies residues 22-42 (STSPAETSPAPTTPNPPVVNP). 2 N-linked (GlcNAc...) asparagine; by host glycosylation sites follow: asparagine 97 and asparagine 346. The helical transmembrane segment at 480–500 (LALFIWLGAGYGITCIAGYMV) threads the bilayer. Residues 501-610 (YYAILALSML…KLGTLLKRLS (110 aa)) lie on the Cytoplasmic side of the membrane. A helical transmembrane segment spans residues 611–631 (WVTVFLCLFLTAIAPVQGQVT). Residues 632–643 (TSPVLPSNQSTE) are Lumenal-facing. Residue asparagine 639 is glycosylated (N-linked (GlcNAc...) asparagine; by host). A helical transmembrane segment spans residues 644 to 664 (CTLLPPPVFLIFSAVLMSKTL). The Cytoplasmic segment spans residues 665 to 708 (KRMGPVNKVGAAGHSARRTNSPKNLYKSKQIANTKSGPREPRRR). The helical transmembrane segment at 709-729 (VVVKALLILTASSALQSIHLA) threads the bilayer. Positions 722 to 776 (ALQSIHLAQAFDSGSLPEGAWEEEMQLVQGCNQECSLEEDECSCPDGQSMTRKLL) are excised as a propeptide. At 730–1330 (QAFDSGSLPE…GSFFRNYLGS (601 aa)) the chain is on the lumenal side. Disulfide bonds link cysteine 901–cysteine 1096 and cysteine 929–cysteine 934. Asparagine 1081 and asparagine 1299 each carry an N-linked (GlcNAc...) asparagine; by host glycan. The chain crosses the membrane as a helical span at residues 1331–1351 (ITLGIVLTLLPVAVVLLFFCY). At 1352-1421 (GDKLFKLCSC…GKGKNYKELV (70 aa)) the chain is on the cytoplasmic side.

This sequence belongs to the nairovirus envelope glycoprotein family. Heterodimer with glycoprotein C; in prefusion state. In terms of assembly, heterodimer with glycoprotein N; in prefusion state. Homotrimeric; in postfusion state. Specific enzymatic cleavage by host MBTPS1/S1P/SKI-1 endopeptidase yield glycoprotein N. Specific enzymatic cleavages by host furin-like protease and MBTPS1/S1P endopeptidase yield GP38. In terms of processing, glycosylated.

The protein localises to the host endoplasmic reticulum membrane. Its subcellular location is the virion membrane. It is found in the host Golgi apparatus membrane. Functionally, glycoprotein N and glycoprotein C interact with each other and are present at the surface of the virion. Glycoprotein N probably locks the Gn-Gc complex in a prefusion state. Glycoprotein N and glycoprotein C are able to attach the virion to host cell receptors. This attachment induces virion internalization predominantly through clathrin-dependent endocytosis. Glycoprotein C and glycoprotein N interact with each other and are present at the surface of the virion. The spikes at the surface of the virion are formed by an N-terminal extension of glycoprotein C. Glycoprotein N and glycoprotein C are able to attach the virion to host cell receptors. This attachment induces virion internalization predominantly through clathrin-dependent endocytosis. Class II fusion protein that promotes fusion of viral membrane with host endosomal membrane after endocytosis of the virion. Exposure to potassium is necessary for the conformational change leading to fusion. In Ixodes, this protein is Envelopment polyprotein (GP).